A 132-amino-acid chain; its full sequence is Pollen allergen Phl p 6 (132 aa).

An N-terminal signal peptide occupies residues 1 to 22; it reads MVAMFLAVAVVLGLATSPTAEG.

This sequence belongs to the Poa p IX/Phl p VI allergen family.

The protein is Pollen allergen Phl p 6 (PHLPVI) of Phleum pratense (Common timothy).